The sequence spans 547 residues: Chaperonin GroEL (547 aa).

ATP is bound by residues 30-33 (TLGP), Lys-51, 87-91 (DGTTT), Gly-415, and Asp-496.

It belongs to the chaperonin (HSP60) family. In terms of assembly, forms a cylinder of 14 subunits composed of two heptameric rings stacked back-to-back. Interacts with the co-chaperonin GroES.

It localises to the cytoplasm. The catalysed reaction is ATP + H2O + a folded polypeptide = ADP + phosphate + an unfolded polypeptide.. In terms of biological role, together with its co-chaperonin GroES, plays an essential role in assisting protein folding. The GroEL-GroES system forms a nano-cage that allows encapsulation of the non-native substrate proteins and provides a physical environment optimized to promote and accelerate protein folding. The protein is Chaperonin GroEL of Actinobacillus pleuropneumoniae serotype 5b (strain L20).